Consider the following 455-residue polypeptide: Rho GTPase-activating protein 3 (455 aa).

Residues 1–12 are compositionally biased toward polar residues; that stretch reads MTNFSRSKSTGT. A disordered region spans residues 1 to 68; it reads MTNFSRSKST…HASRSGNGSG (68 aa). Residues 24-33 are compositionally biased toward basic and acidic residues; that stretch reads GPDKYENIHN. The segment covering 43-54 has biased composition (low complexity); the sequence is STTSTDYYDAST. The segment covering 55–64 has biased composition (polar residues); that stretch reads PLSSHASRSG. The CRIB domain maps to 105 to 118; that stretch reads IGWPTEVKHVSHVT. Positions 153 to 331 constitute a Rho-GAP domain; the sequence is KSMQCSYDDR…LILMNLKERE (179 aa). 2 disordered regions span residues 342–366 and 432–455; these read KQTS…KPNN and FVSN…SLPW. The span at 435-446 shows a compositional bias: basic and acidic residues; sequence NRDEGRKGREAW.

In terms of tissue distribution, expressed in differentiating xylem cells.

The protein localises to the cell membrane. Functionally, acts as a GTPase activator for the Rac-type GTPase by converting it to an inactive GDP-bound state. Involved in secondary wall pattern formation. In association with ROPGEF4, mediates local activation of ARAC10/ROP11 to initiate the distinct pattern of secondary cell walls in xylem cells. This Arabidopsis thaliana (Mouse-ear cress) protein is Rho GTPase-activating protein 3 (ROPGAP3).